Here is a 118-residue protein sequence, read N- to C-terminus: BLOC-1-related complex subunit 8 (118 aa).

Over residues 98 to 107 the composition is skewed to polar residues; that stretch reads KEQISNSQGR. The segment at 98–118 is disordered; it reads KEQISNSQGRSPHVSAPSASS.

This sequence belongs to the BORCS8 family.

The protein resides in the lysosome membrane. Functionally, as part of a BORC-like complex, it may play a role in the movement and localization of lysosomes at the cell periphery. Associated with the cytosolic face of lysosomes, this complex may couple lysosomes to microtubule plus-end-directed kinesin motors, driving lysosome movement toward the cell periphery. This chain is BLOC-1-related complex subunit 8, found in Tetraodon nigroviridis (Spotted green pufferfish).